Reading from the N-terminus, the 498-residue chain is Signal recognition particle receptor FtsY (498 aa).

Disordered stretches follow at residues 1-130 (MGLF…PNQS) and 147-200 (KVES…YNRS). A compositionally biased stretch (low complexity) spans 36–46 (ALLAETAETAE). Over residues 103–120 (SENSVAAVQNNTETMPSQ) the composition is skewed to polar residues. GTP-binding positions include 301–308 (GVNGVGKT), 383–387 (DTAGR), and 447–450 (TKID).

Belongs to the GTP-binding SRP family. FtsY subfamily. As to quaternary structure, part of the signal recognition particle protein translocation system, which is composed of SRP and FtsY.

It is found in the cell membrane. Its subcellular location is the cytoplasm. The enzyme catalyses GTP + H2O = GDP + phosphate + H(+). In terms of biological role, involved in targeting and insertion of nascent membrane proteins into the cytoplasmic membrane. Acts as a receptor for the complex formed by the signal recognition particle (SRP) and the ribosome-nascent chain (RNC). In Streptococcus mutans serotype c (strain ATCC 700610 / UA159), this protein is Signal recognition particle receptor FtsY.